The following is a 1625-amino-acid chain: Probable cation-transporting ATPase I (1625 aa).

The next 8 membrane-spanning stretches (helical) occupy residues valine 148–alanine 168, leucine 177–valine 197, leucine 358–isoleucine 378, alanine 637–valine 657, tryptophan 673–alanine 693, isoleucine 778–valine 798, leucine 968–leucine 988, and alanine 997–alanine 1017. Aspartate 1053 (4-aspartylphosphate intermediate) is an active-site residue. 2 residues coordinate Mg(2+): aspartate 1340 and aspartate 1344. Helical transmembrane passes span isoleucine 1401 to alanine 1421, leucine 1432 to phenylalanine 1452, and valine 1547 to isoleucine 1567.

Belongs to the cation transport ATPase (P-type) (TC 3.A.3) family.

It localises to the cell membrane. The enzyme catalyses ATP + H2O = ADP + phosphate + H(+). The chain is Probable cation-transporting ATPase I (ctpI) from Mycobacterium tuberculosis (strain CDC 1551 / Oshkosh).